The sequence spans 425 residues: COBRA-like protein 4 (425 aa).

The first 27 residues, 1-27 (MAIGVGGCCAVLLAAALLFSSPATTYA), serve as a signal peptide directing secretion. N-linked (GlcNAc...) asparagine glycosylation is found at Asn36, Asn163, Asn171, Asn319, and Asn352.

It belongs to the COBRA family.

This chain is COBRA-like protein 4 (BC1L9), found in Oryza sativa subsp. japonica (Rice).